A 179-amino-acid polypeptide reads, in one-letter code: Lebocin-3 (179 aa).

Positions 1 to 16 (MYKFLVFSSVLVLFFA) are cleaved as a signal peptide. A propeptide spanning residues 17–120 (QASCQRFIQP…QPIESHRNTR (104 aa)) is cleaved from the precursor. A glycan (O-linked (GalNAc...) threonine) is linked at threonine 135. A propeptide spanning residues 153–179 (RRHASEDQEELRQYNEHFLIPRDIFQE) is cleaved from the precursor.

It belongs to the lebocin family. In terms of processing, O-glycosylation is important for the antibacterial activity of lebocin. In terms of tissue distribution, hemolymph. Produced in fat body.

The protein localises to the secreted. In terms of biological role, antibacterial peptide. The polypeptide is Lebocin-3 (LEB3) (Bombyx mori (Silk moth)).